A 395-amino-acid chain; its full sequence is Ankyrin repeat domain-containing protein 65 (395 aa).

10 ANK repeats span residues Gln52–Glu81, Ala85–Ala114, Ala118–Ala147, Ala151–Thr180, Arg185–Arg212, Leu213–Ala241, Val245–Leu274, His278–Ser307, Leu311–Ala340, and Leu344–Leu373.

The protein is Ankyrin repeat domain-containing protein 65 (ANKRD65) of Bos taurus (Bovine).